The sequence spans 147 residues: Putative pre-16S rRNA nuclease (147 aa).

It belongs to the YqgF nuclease family.

It localises to the cytoplasm. In terms of biological role, could be a nuclease involved in processing of the 5'-end of pre-16S rRNA. The sequence is that of Putative pre-16S rRNA nuclease from Acinetobacter baylyi (strain ATCC 33305 / BD413 / ADP1).